The chain runs to 349 residues: Ferredoxin--NADP reductase 1 (349 aa).

The FAD site is built by E36, K44, Y48, V88, L123, D290, and S331.

Belongs to the ferredoxin--NADP reductase type 2 family. In terms of assembly, homodimer. Requires FAD as cofactor.

It carries out the reaction 2 reduced [2Fe-2S]-[ferredoxin] + NADP(+) + H(+) = 2 oxidized [2Fe-2S]-[ferredoxin] + NADPH. The polypeptide is Ferredoxin--NADP reductase 1 (Lysinibacillus sphaericus (strain C3-41)).